We begin with the raw amino-acid sequence, 306 residues long: Glutathione transport system permease protein GsiC (306 aa).

The Cytoplasmic segment spans residues M1–R8. Residues L9–M29 form a helical membrane-spanning segment. The Periplasmic portion of the chain corresponds to L30–T102. The 198-residue stretch at F95–V292 folds into the ABC transmembrane type-1 domain. A helical membrane pass occupies residues I103–W123. Residues R124–T134 lie on the Cytoplasmic side of the membrane. A helical membrane pass occupies residues I135–F155. Topologically, residues S156–D168 are periplasmic. Residues S169–A189 traverse the membrane as a helical segment. The Cytoplasmic segment spans residues R190 to M228. A helical membrane pass occupies residues I229–V249. At E250–E277 the chain is on the periplasmic side. The chain crosses the membrane as a helical span at residues I278–A298. Over I299–K306 the chain is Cytoplasmic.

The protein belongs to the binding-protein-dependent transport system permease family. As to quaternary structure, the complex is composed of two ATP-binding proteins (GsiA), two transmembrane proteins (GsiC and GsiD) and a solute-binding protein (GsiB).

It is found in the cell inner membrane. Part of the ABC transporter complex GsiABCD involved in glutathione import. Probably responsible for the translocation of the substrate across the membrane. This chain is Glutathione transport system permease protein GsiC, found in Escherichia coli O1:K1 / APEC.